Reading from the N-terminus, the 176-residue chain is Inorganic pyrophosphatase (176 aa).

Positions 30, 44, and 56 each coordinate substrate. Residues Asp66, Asp71, and Asp103 each contribute to the Mg(2+) site. Tyr140 provides a ligand contact to substrate.

The protein belongs to the PPase family. As to quaternary structure, homohexamer. Mg(2+) is required as a cofactor.

The protein localises to the cytoplasm. The catalysed reaction is diphosphate + H2O = 2 phosphate + H(+). Functionally, catalyzes the hydrolysis of inorganic pyrophosphate (PPi) forming two phosphate ions. The polypeptide is Inorganic pyrophosphatase (Methanothermobacter thermautotrophicus (strain ATCC 29096 / DSM 1053 / JCM 10044 / NBRC 100330 / Delta H) (Methanobacterium thermoautotrophicum)).